Consider the following 312-residue polypeptide: 4-hydroxyphenylacetate decarboxylase activating enzyme (312 aa).

The Radical SAM core domain maps to 16-299 (HDGPGCRTSV…MEHLQQLYLD (284 aa)). C30, C34, C37, C56, C62, C65, and C101 together coordinate [4Fe-4S] cluster. Position 36–38 (36–38 (WCA)) interacts with S-adenosyl-L-methionine. 4Fe-4S ferredoxin-type domains lie at 47 to 79 (KHIMVAENVCKWKNGCRSCINACSHDSIKFSED) and 80 to 112 (GKLKISWDTCEKCETFDCVNMCPNNALKQCVKE). S-adenosyl-L-methionine-binding positions include G140, 189-191 (DVK), and H263.

This sequence belongs to the organic radical-activating enzymes family. In terms of assembly, monomer. The cofactor is [4Fe-4S] cluster.

It catalyses the reaction glycyl-[protein] + reduced [flavodoxin] + S-adenosyl-L-methionine = glycin-2-yl radical-[protein] + semiquinone [flavodoxin] + 5'-deoxyadenosine + L-methionine + H(+). In terms of biological role, catalyzes activation of 4-hydroxyphenylacetate decarboxylase under anaerobic conditions by generation of an organic free radical on a glycine residue, via a homolytic cleavage of S-adenosyl-L-methionine (SAM). In Clostridium scatologenes, this protein is 4-hydroxyphenylacetate decarboxylase activating enzyme.